Consider the following 129-residue polypeptide: Phosphoribosyl-AMP cyclohydrolase (129 aa).

Position 79 (Asp-79) interacts with Mg(2+). Cys-80 lines the Zn(2+) pocket. Residues Asp-81 and Asp-83 each coordinate Mg(2+). 2 residues coordinate Zn(2+): Cys-96 and Cys-103.

It belongs to the PRA-CH family. Homodimer. Requires Mg(2+) as cofactor. Zn(2+) serves as cofactor.

The protein localises to the cytoplasm. The catalysed reaction is 1-(5-phospho-beta-D-ribosyl)-5'-AMP + H2O = 1-(5-phospho-beta-D-ribosyl)-5-[(5-phospho-beta-D-ribosylamino)methylideneamino]imidazole-4-carboxamide. It participates in amino-acid biosynthesis; L-histidine biosynthesis; L-histidine from 5-phospho-alpha-D-ribose 1-diphosphate: step 3/9. In terms of biological role, catalyzes the hydrolysis of the adenine ring of phosphoribosyl-AMP. The protein is Phosphoribosyl-AMP cyclohydrolase of Magnetococcus marinus (strain ATCC BAA-1437 / JCM 17883 / MC-1).